Reading from the N-terminus, the 430-residue chain is Glutamate-1-semialdehyde 2,1-aminomutase 2 (430 aa).

Lysine 269 is subject to N6-(pyridoxal phosphate)lysine.

It belongs to the class-III pyridoxal-phosphate-dependent aminotransferase family. HemL subfamily. As to quaternary structure, homodimer. Requires pyridoxal 5'-phosphate as cofactor.

It localises to the cytoplasm. It catalyses the reaction (S)-4-amino-5-oxopentanoate = 5-aminolevulinate. It participates in porphyrin-containing compound metabolism; protoporphyrin-IX biosynthesis; 5-aminolevulinate from L-glutamyl-tRNA(Glu): step 2/2. In Bacillus pumilus (strain SAFR-032), this protein is Glutamate-1-semialdehyde 2,1-aminomutase 2.